Reading from the N-terminus, the 498-residue chain is UDP-N-acetylmuramate--L-alanine ligase (498 aa).

ATP is bound at residue 133–139 (GSSGKTT).

This sequence belongs to the MurCDEF family.

The protein localises to the cytoplasm. The enzyme catalyses UDP-N-acetyl-alpha-D-muramate + L-alanine + ATP = UDP-N-acetyl-alpha-D-muramoyl-L-alanine + ADP + phosphate + H(+). Its pathway is cell wall biogenesis; peptidoglycan biosynthesis. Functionally, cell wall formation. This Wolbachia pipientis wMel protein is UDP-N-acetylmuramate--L-alanine ligase.